A 214-amino-acid polypeptide reads, in one-letter code: Soluble inorganic pyrophosphatase (214 aa).

Residues Lys-64, Arg-78, and Tyr-90 each coordinate substrate. Positions 100, 105, and 137 each coordinate Mg(2+). Tyr-174 serves as a coordination point for substrate.

The protein belongs to the PPase family. The cofactor is Mg(2+).

The protein localises to the cytoplasm. The enzyme catalyses diphosphate + H2O = 2 phosphate + H(+). This is Soluble inorganic pyrophosphatase (IPP) from Oryza sativa subsp. indica (Rice).